The primary structure comprises 505 residues: RNA-splicing ligase RtcB homolog (505 aa).

Mn(2+) is bound by residues Asp-119, Cys-122, His-227, His-259, and His-353. Position 226–230 (226–230 (NHYAE)) interacts with GMP. Residues 353–354 (HN), 402–405 (GGTM), Ser-409, 428–431 (HGAG), and Lys-504 contribute to the GMP site. Catalysis depends on His-428, which acts as the GMP-histidine intermediate.

Belongs to the RtcB family. Catalytic component of the tRNA-splicing ligase complex. It depends on Mn(2+) as a cofactor.

It is found in the nucleus. It localises to the cytoplasm. It catalyses the reaction a 3'-end 3'-phospho-ribonucleotide-RNA + a 5'-end dephospho-ribonucleoside-RNA + GTP = a ribonucleotidyl-ribonucleotide-RNA + GMP + diphosphate. The catalysed reaction is a 3'-end 2',3'-cyclophospho-ribonucleotide-RNA + a 5'-end dephospho-ribonucleoside-RNA + GTP + H2O = a ribonucleotidyl-ribonucleotide-RNA + GMP + diphosphate + H(+). Catalytic subunit of the tRNA-splicing ligase complex that acts by directly joining spliced tRNA halves to mature-sized tRNAs by incorporating the precursor-derived splice junction phosphate into the mature tRNA as a canonical 3',5'-phosphodiester. May act as an RNA ligase with broad substrate specificity, and may function toward other RNAs. The protein is RNA-splicing ligase RtcB homolog of Danio rerio (Zebrafish).